A 119-amino-acid polypeptide reads, in one-letter code: Ribosome-binding factor A (119 aa).

Belongs to the RbfA family. In terms of assembly, monomer. Binds 30S ribosomal subunits, but not 50S ribosomal subunits or 70S ribosomes.

It is found in the cytoplasm. One of several proteins that assist in the late maturation steps of the functional core of the 30S ribosomal subunit. Associates with free 30S ribosomal subunits (but not with 30S subunits that are part of 70S ribosomes or polysomes). Required for efficient processing of 16S rRNA. May interact with the 5'-terminal helix region of 16S rRNA. In Mycoplasmoides gallisepticum (strain R(low / passage 15 / clone 2)) (Mycoplasma gallisepticum), this protein is Ribosome-binding factor A.